The sequence spans 245 residues: Phycocyanobilin:ferredoxin oxidoreductase (245 aa).

This sequence belongs to the HY2 family.

It carries out the reaction (2R,3Z)-phycocyanobilin + 4 oxidized [2Fe-2S]-[ferredoxin] = biliverdin IXalpha + 4 reduced [2Fe-2S]-[ferredoxin] + 4 H(+). Catalyzes the four-electron reduction of biliverdin IX-alpha (2-electron reduction at both the A and D rings); the reaction proceeds via an isolatable 2-electron intermediate, 181,182-dihydrobiliverdin. This chain is Phycocyanobilin:ferredoxin oxidoreductase, found in Rippkaea orientalis (strain PCC 8801 / RF-1) (Cyanothece sp. (strain PCC 8801)).